Here is a 306-residue protein sequence, read N- to C-terminus: Dermonecrotic toxin LiSicTox-alphaIA2bi (306 aa).

Positions 1-18 (MLPYIALILVCWSVLSQA) are cleaved as a signal peptide. The propeptide occupies 19–26 (AQTDVEGR). His-38 is a catalytic residue. Mg(2+) is bound by residues Glu-58 and Asp-60. The Nucleophile role is filled by His-74. 2 disulfides stabilise this stretch: Cys-78-Cys-84 and Cys-80-Cys-223. Asp-118 provides a ligand contact to Mg(2+). Residue Asn-283 is glycosylated (N-linked (GlcNAc...) asparagine).

It belongs to the arthropod phospholipase D family. Class II subfamily. Mg(2+) serves as cofactor. In terms of tissue distribution, expressed by the venom gland.

The protein localises to the secreted. It catalyses the reaction an N-(acyl)-sphingosylphosphocholine = an N-(acyl)-sphingosyl-1,3-cyclic phosphate + choline. It carries out the reaction an N-(acyl)-sphingosylphosphoethanolamine = an N-(acyl)-sphingosyl-1,3-cyclic phosphate + ethanolamine. The catalysed reaction is a 1-acyl-sn-glycero-3-phosphocholine = a 1-acyl-sn-glycero-2,3-cyclic phosphate + choline. The enzyme catalyses a 1-acyl-sn-glycero-3-phosphoethanolamine = a 1-acyl-sn-glycero-2,3-cyclic phosphate + ethanolamine. Its function is as follows. Dermonecrotic toxins cleave the phosphodiester linkage between the phosphate and headgroup of certain phospholipids (sphingolipid and lysolipid substrates), forming an alcohol (often choline) and a cyclic phosphate. This toxin acts on sphingomyelin (SM). It may also act on ceramide phosphoethanolamine (CPE), lysophosphatidylcholine (LPC) and lysophosphatidylethanolamine (LPE), but not on lysophosphatidylserine (LPS), and lysophosphatidylglycerol (LPG). It acts by transphosphatidylation, releasing exclusively cyclic phosphate products as second products. Induces dermonecrosis, hemolysis, increased vascular permeability, edema, inflammatory response, and platelet aggregation. The chain is Dermonecrotic toxin LiSicTox-alphaIA2bi from Loxosceles intermedia (Brown spider).